Consider the following 676-residue polypeptide: RNA helicase NPH-II (676 aa).

The Helicase ATP-binding domain maps to 172–347; that stretch reads FSAWISHRPV…VFLPNPAFIH (176 aa). 185 to 192 contributes to the ATP binding site; it reads GGTGVGKT. A DEXH box motif is present at residues 296–299; it reads DEVH. One can recognise a Helicase C-terminal domain in the interval 366 to 535; the sequence is NPSSRMAYIE…NYILYANKFN (170 aa).

Belongs to the DEAD box helicase family. DEAH subfamily. Monomer.

It localises to the virion. The enzyme catalyses ATP + H2O = ADP + phosphate + H(+). NTP-dependent helicase that catalyzes unidirectional unwinding of 3'tailed duplex RNAs and plays an important role during transcription of early mRNAs, presumably by preventing R-loop formation behind the elongating RNA polymerase. Might also play a role in the export of newly synthesized mRNA chains out of the core into the cytoplasm. Required for replication and propagation of viral particles. The sequence is that of RNA helicase NPH-II (OPG084) from Homo sapiens (Human).